We begin with the raw amino-acid sequence, 696 residues long: Tegument protein UL47 (696 aa).

Composition is skewed to basic residues over residues methionine 1 to threonine 15 and arginine 70 to serine 81. Disordered stretches follow at residues methionine 1–glycine 39 and serine 54–proline 130. The interval glutamate 57–alanine 84 is RNA-binding. The short motif at arginine 70–alanine 84 is the Nuclear localization signal element. The segment covering alanine 87 to serine 103 has biased composition (low complexity). The Nuclear export signal signature appears at serine 650–glutamate 673.

The protein belongs to the alphaherpesvirinae HHV-1 UL47 family. As to quaternary structure, interacts with US3 kinase. Interacts with UL31 and UL34; these interactions seem important for efficient virion nuclear egress. Interacts with UL41/VHS. In terms of processing, phosphorylated by US3. This phosphorylation is required for proper nuclear localization.

Its subcellular location is the virion tegument. The protein localises to the host nucleus. It localises to the host cytoplasm. Functionally, tegument protein that can bind to various RNA transcripts. Plays a role in the attenuation of selective viral and cellular mRNA degradation by modulating the activity of host shutoff RNase UL41/VHS. Also plays a role in the primary envelopment of virions in the perinuclear space, probably by interacting with two nuclear egress proteins UL31 and UL34. This Human herpesvirus 2 (strain HG52) (HHV-2) protein is Tegument protein UL47.